The primary structure comprises 201 residues: Retinol-binding protein 4 (201 aa).

A signal peptide spans 1–18; the sequence is MEWVWALVLLAALGGGSA. 3 disulfide bridges follow: Cys22–Cys178, Cys88–Cys192, and Cys138–Cys147. Gln116 provides a ligand contact to substrate. Arg139 bears the Omega-N-methylarginine mark.

It belongs to the calycin superfamily. Lipocalin family. Interacts with TTR. Interaction with TTR prevents its loss by filtration through the kidney glomeruli. Interacts with STRA6.

The protein resides in the secreted. Its function is as follows. Retinol-binding protein that mediates retinol transport in blood plasma. Delivers retinol from the liver stores to the peripheral tissues. Transfers the bound all-trans retinol to STRA6, that then facilitates retinol transport across the cell membrane. This Mus musculus (Mouse) protein is Retinol-binding protein 4 (Rbp4).